The primary structure comprises 3034 residues: Cadherin EGF LAG seven-pass G-type receptor 1 (3034 aa).

The signal sequence occupies residues 1-29; that stretch reads MAPSSPRVLPALVLLAAAALPALELGAAA. The Extracellular portion of the chain corresponds to 30–2484; it reads WELRVPGGAR…REHGEVLPLK (2455 aa). Residues 222–243 are compositionally biased toward low complexity; sequence GTPSESPSVSPSLLNLSQPRAG. The interval 222–267 is disordered; the sequence is GTPSESPSVSPSLLNLSQPRAGVVRRSRRGTGSSTSPQFPLPSYQV. Asn-236 is a glycosylation site (N-linked (GlcNAc...) asparagine). Cadherin domains are found at residues 261 to 368, 369 to 474, 475 to 580, 581 to 702, 703 to 804, 805 to 907, 908 to 1014, 1015 to 1116, and 1121 to 1239; these read PLPS…SPVF, EQSE…YPQF, SEKR…APIF, VSSP…DPMF, TQPV…RPVF, QSSH…APRF, LRDF…PPVF, EKDE…PPEL, and ILFN…SPLL. Residues Asn-561, Asn-649, and Asn-793 are each glycosylated (N-linked (GlcNAc...) asparagine). 6 N-linked (GlcNAc...) asparagine glycosylation sites follow: Asn-1129, Asn-1154, Asn-1228, Asn-1264, Asn-1274, and Asn-1302. In terms of domain architecture, EGF-like 1; calcium-binding spans 1318-1376; sequence DDNICLREPCENYMKCVSVLRFDSSAPFISSTTVLFRPIHPITGLRCRCPPGFTGDYCE. 9 disulfide bridges follow: Cys-1322/Cys-1333, Cys-1327/Cys-1364, Cys-1366/Cys-1375, Cys-1382/Cys-1393, Cys-1387/Cys-1402, Cys-1404/Cys-1413, Cys-1422/Cys-1433, Cys-1427/Cys-1443, and Cys-1445/Cys-1455. Positions 1378–1414 constitute an EGF-like 2; calcium-binding domain; the sequence is EIDLCYSNPCGANGRCRSREGGYTCECFEDFTGEHCQ. Residues 1418 to 1456 enclose the EGF-like 3; calcium-binding domain; that stretch reads RSGRCASGVCKNGGTCVNLLIGGFHCVCPPGEYEHPYCE. The region spanning 1457 to 1661 is the Laminin G-like 1 domain; that stretch reads VSTRSFPPQS…IANNGTRAGC (205 aa). 3 N-linked (GlcNAc...) asparagine glycosylation sites follow: Asn-1591, Asn-1638, and Asn-1655. 13 disulfide bridges follow: Cys-1635–Cys-1661, Cys-1668–Cys-1679, Cys-1673–Cys-1688, Cys-1690–Cys-1699, Cys-1855–Cys-1885, Cys-1891–Cys-1902, Cys-1896–Cys-1911, Cys-1913–Cys-1922, Cys-1926–Cys-1937, Cys-1931–Cys-1949, Cys-1951–Cys-1960, Cys-1968–Cys-1981, and Cys-1983–Cys-1993. Positions 1664–1700 constitute an EGF-like 4; calcium-binding domain; the sequence is QRNFCDGTSCQNGGTCVNRWNTYLCECPLRFGGKNCE. Position 1681 is a (3R)-3-hydroxyasparagine (Asn-1681). The region spanning 1704–1885 is the Laminin G-like 2 domain; that stretch reads PHPQRFTGES…ALKVRVKDGC (182 aa). The 36-residue stretch at 1887-1922 folds into the EGF-like 5; calcium-binding domain; the sequence is VEDPCASSPCPPHSHCRDTWDSYSCICDRGYFGKKC. Asp-1904 is subject to (3R)-3-hydroxyaspartate. In terms of domain architecture, EGF-like 6; calcium-binding spans 1923–1961; it reads VDACLLNPCKHVAACVRSPNTPRGYSCECGPGHYGQYCE. The region spanning 1962–1994 is the EGF-like 7; calcium-binding domain; that stretch reads NKVDLPCPKGWWGNPVCGPCHCAVSQGFDPDCN. N-linked (GlcNAc...) asparagine glycosylation occurs at Asn-1994. The region spanning 1996–2031 is the EGF-like 8; calcium-binding domain; that stretch reads TNGQCQCKENYYKPPAQDACLPCDCFPHGSHSRACD. Cystine bridges form between Cys-2000/Cys-2015, Cys-2002/Cys-2018, Cys-2020/Cys-2030, Cys-2039/Cys-2048, and Cys-2051/Cys-2063. Residues 2018-2065 enclose the Laminin EGF-like domain; sequence CDCFPHGSHSRACDMDTGQCACKPGVIGRQCNRCDNPFAEVTSLGCEV. N-linked (GlcNAc...) asparagine glycans are attached at residues Asn-2118, Asn-2137, Asn-2144, Asn-2155, Asn-2160, and Asn-2272. Residues 2295–2346 are disordered; it reads SVSFPADTFKPPEKKEGPVVRLTNRRTTPLTAQPEPRAERETSSSRRRRHPD. The GAIN-B domain occupies 2312 to 2476; it reads PVVRLTNRRT…AVLMDISRRE (165 aa). Intrachain disulfides connect Cys-2426/Cys-2458 and Cys-2446/Cys-2460. A GPS region spans residues 2426–2476; that stretch reads CVFWNHSLDTGGTGGWSAKGCELLSRNRTHVTCQCSHSASCAVLMDISRRE. Residues Asn-2430 and Asn-2452 are each glycosylated (N-linked (GlcNAc...) asparagine). The helical transmembrane segment at 2485–2505 threads the bilayer; the sequence is IITYAALSLSLVALLVAFVLL. Topologically, residues 2506–2516 are cytoplasmic; that stretch reads SLVRTLRSNLH. A helical membrane pass occupies residues 2517-2537; the sequence is SIHKNLITALFFSQLIFMVGI. Residue Asn-2538 is glycosylated (N-linked (GlcNAc...) asparagine). The Extracellular segment spans residues 2538 to 2542; that stretch reads NQTEN. A helical membrane pass occupies residues 2543–2563; sequence PFLCTVVAILLHYVSMGTFAW. Residues 2564–2587 lie on the Cytoplasmic side of the membrane; the sequence is TLVENLHVYRMLTEVRNIDTGPMR. Residues 2588 to 2608 form a helical membrane-spanning segment; the sequence is FYHVVGWGIPAIVTGLAVGLD. The Extracellular segment spans residues 2609–2625; it reads PQGYGNPDFCWLSLQDT. The chain crosses the membrane as a helical span at residues 2626–2646; sequence LIWSFAGPVGTVIIINTVIFV. Over 2647–2670 the chain is Cytoplasmic; the sequence is LSAKVSCQRKHHYYERKGVVSMLR. The helical transmembrane segment at 2671–2691 threads the bilayer; it reads TAFLLLLLVTATWLLGLLAVN. The Extracellular segment spans residues 2692–2694; it reads SDT. A helical membrane pass occupies residues 2695 to 2715; sequence LSFHYLFAAFSCLQGIFVLLF. Residues 2716–3034 are Cytoplasmic-facing; sequence HCVAHREVRK…QANGSDSEKP (319 aa). The tract at residues 2774 to 3034 is disordered; sequence TASLDSTTRD…QANGSDSEKP (261 aa). Ser-2776, Ser-2779, Ser-2886, and Ser-2888 each carry phosphoserine. Residues 2893 to 2909 are compositionally biased toward basic and acidic residues; the sequence is TEPHLKVETKVSVELHR. Over residues 2976–2986 the composition is skewed to low complexity; the sequence is SPTSSRTSSLG. Residues 3003–3012 show a composition bias toward basic and acidic residues; the sequence is PRREPGREHL. The segment covering 3020–3034 has biased composition (polar residues); it reads RTGSAQANGSDSEKP.

Belongs to the G-protein coupled receptor 2 family. LN-TM7 subfamily. In terms of processing, the iron and 2-oxoglutarate dependent 3-hydroxylation of aspartate and asparagine is (R) stereospecific within EGF domains. As to expression, expressed in the brain, where it is localized principally in the ependymal cell layer, choroid plexus and the area postrema. Also found in spinal cord and in the eye.

It localises to the cell membrane. Functionally, receptor that may have an important role in cell/cell signaling during nervous system formation. This is Cadherin EGF LAG seven-pass G-type receptor 1 (Celsr1) from Mus musculus (Mouse).